A 3726-amino-acid polypeptide reads, in one-letter code: Zinc finger homeobox protein 3 (3726 aa).

2 disordered regions span residues 1 to 79 and 95 to 129; these read MEGC…SKEV and MEHH…VENL. The C2H2-type 1 zinc finger occupies 79–103; it reads VSCNECSASFSSLQTYMEHHCPGTH. Residues 116–126 are compositionally biased toward acidic residues; the sequence is TSEEGEEESDV. Residues 282 to 305 form a C2H2-type 2 zinc finger; that stretch reads LMCFLCKLSFGYVRSFVTHAVHDH. Positions 417–557 are disordered; the sequence is SVPLGPLASS…GPASTTSNSA (141 aa). Position 426 is a phosphoserine (Ser-426). Thr-428 is subject to Phosphothreonine. A compositionally biased stretch (basic and acidic residues) spans 431-459; sequence SEGKDSGAAEGDKQESGGHQDCFSEKVEP. Acidic residues-rich tracts occupy residues 460–491 and 500–510; these read AEEE…EEEE and DLEEELEDSPS. Residues 528-557 are compositionally biased toward polar residues; sequence SNPSISNSPLMPNVLQTLSRGPASTTSNSA. Residues Ser-535 and Ser-573 each carry the phosphoserine modification. The disordered stretch occupies residues 590 to 621; sequence DFADESANKDSATAPEPNESTEGDDGGFVPHH. C2H2-type zinc fingers lie at residues 641-664, 672-695, and 727-751; these read VECP…TMMH, LKCP…KEKH, and FRCE…SDKH. Residues 805–829 form a C2H2-type 6; atypical zinc finger; the sequence is WRCEVCDYETNVARNLRIHMTSEKH. The segment at 946-969 adopts a C2H2-type 7; degenerate zinc-finger fold; it reads FQCAVCNKFTTDNLDMLGLHMNVE. The C2H2-type 8; atypical zinc finger occupies 985–1009; that stretch reads YQCKLCRYNTQLKANFQLHCKTDKH. A C2H2-type 9; atypical zinc finger spans residues 1041 to 1065; it reads LKCNACDYYTNSLEKLRLHTVNSRH. Residues 1089–1113 form a C2H2-type 10; atypical zinc finger; sequence YHCVLCNYSTKAKLNLIQHVRSMKH. The disordered stretch occupies residues 1125 to 1228; it reads LQKGLPEEDE…KRPKASEEIK (104 aa). The span at 1149-1159 shows a compositional bias: acidic residues; that stretch reads DPEEPVEDAEG. Polar residues-rich tracts occupy residues 1175 to 1191 and 1199 to 1217; these read GSGS…SSSQ and SPAT…TPLS. Ser-1207 carries the phosphoserine modification. Residues 1233–1256 form a C2H2-type 11; atypical zinc finger; sequence YQCPYCKYSNADVNRLRVHAMTQH. The C2H2-type 12 zinc-finger motif lies at 1262–1285; that stretch reads LRCPLCQDMLNNKIHLQLHLTHLH. The interval 1320–1361 is disordered; that stretch reads DGNSTLEEVGKQPEASEDPGKNILPPASMEHGGDLKPTSADP. C2H2-type zinc fingers lie at residues 1370 to 1395, 1411 to 1433, and 1439 to 1462; these read FLCW…NEVH, YRCN…SQYH, and TMCC…ETSH. Residues 1500–1539 form a disordered region; it reads EEDKEEESDLEDKQSPTGSDSGSVQEDSGSEPKRALPFRK. Residues 1514–1526 show a composition bias toward polar residues; that stretch reads SPTGSDSGSVQED. The C2H2-type 16 zinc-finger motif lies at 1555–1579; it reads YKCTVCKESFTQKNILLVHYNSVSH. At Ser-1600 the chain carries Phosphoserine. The C2H2-type 17 zinc finger occupies 1606 to 1630; that stretch reads FKCNTCNVAYSQSSTLEIHMRSVLH. 3 disordered regions span residues 1639 to 1678, 1706 to 1738, and 1866 to 1943; these read LEAA…TATN, NPIS…QQQQ, and LSQS…PRIA. Residues 1643–1669 show a composition bias toward low complexity; sequence SGNSNGTGNSGGVSLSSSTPSPVGSSG. A compositionally biased stretch (basic and acidic residues) spans 1717–1727; that stretch reads EPKEANRKKLA. The span at 1866 to 1878 shows a compositional bias: low complexity; the sequence is LSQSHSALLQPSQ. Residues 1879 to 1902 are compositionally biased toward basic and acidic residues; the sequence is HPEKKNKVVIKEKDKESQREREGP. The C2H2-type 18 zinc-finger motif lies at 1990–2013; that stretch reads LECDSCGKLFSNILILKSHQEHVH. Disordered stretches follow at residues 2037-2089 and 2211-2249; these read YPLR…AQPS and NKDS…WGSK. Residues 2041–2066 are compositionally biased toward pro residues; that stretch reads PQTPEPPPPPPPPPPPPLPTAPPQPA. Residues 2152–2211 constitute a DNA-binding region (homeobox 1); that stretch reads NKRPRTRITDDQLRVLRQYFDINNSPSEEQIKEMADKSGLPQKVIKHWFRNTLFKERQRN. Positions 2214–2223 are enriched in polar residues; the sequence is SPYNFSNPPI. A DNA-binding region (homeobox 2) is located at residues 2249–2308; it reads KRSSRTRFTDYQLRVLQDFFDANAYPKDDEFEQLSNLLNLPTRVIVVWFQNARQKARKNY. A C2H2-type 19; atypical zinc finger spans residues 2335–2358; it reads YQCKKCSLVFQRIFDLIKHQKKLC. Residue Lys-2356 forms a Glycyl lysine isopeptide (Lys-Gly) (interchain with G-Cter in SUMO1) linkage. Disordered stretches follow at residues 2383–2405 and 2429–2529; these read TPTS…APSA and NSKA…PQQL. A compositionally biased stretch (low complexity) spans 2458-2478; the sequence is QPKPEMQQQLEQLEQKTNAPQ. Residues 2479–2507 show a composition bias toward pro residues; sequence PKLPQPAAPSLPQPPPQAPPPQCPLPQSS. A compositionally biased stretch (low complexity) spans 2508–2521; that stretch reads PSPSQLSHLPLKPL. Residues 2539-2561 form a C2H2-type 20 zinc finger; sequence YQCDQCKLAFPSFEHWQEHQQLH. The Nuclear localization signal motif lies at 2624–2626; it reads KRK. Positions 2628-2656 are disordered; it reads EEKASASPGENDSGTGGEEPQRDKRLRTT. At Ser-2634 the chain carries Phosphoserine. The homeobox 3 DNA-binding region spans 2650–2709; sequence DKRLRTTITPEQLEILYQKYLLDSNPTRKMLDHIAHEVGLKKRVVQVWFQNTRARERKGQ. The segment at 2720 to 2743 adopts a C2H2-type 21 zinc-finger fold; that stretch reads RRCPFCRALFKAKTALEAHIRSRH. Positions 2780 to 2789 are enriched in polar residues; that stretch reads SHLPPSSSDG. Positions 2780 to 2805 are disordered; that stretch reads SHLPPSSSDGQGVPLSPVSKTMELSP. Ser-2795 and Ser-2804 each carry phosphoserine. Lys-2815 participates in a covalent cross-link: Glycyl lysine isopeptide (Lys-Gly) (interchain with G-Cter in SUMO1); alternate. A Glycyl lysine isopeptide (Lys-Gly) (interchain with G-Cter in SUMO2); alternate cross-link involves residue Lys-2815. Positions 2850-2877 are disordered; that stretch reads AITDTTTGDEGNADNDSATGIATETKSS. Phosphoserine occurs at positions 2900 and 2904. A disordered region spans residues 2920–2955; sequence VDYSETSSLADPCSPSPGASGSAGKSGDGGDRPGQK. The span at 2929-2944 shows a compositional bias: low complexity; the sequence is ADPCSPSPGASGSAGK. A DNA-binding region (homeobox 4) is located at residues 2952–3011; that stretch reads PGQKRFRTQMTNLQLKVLKSCFNDYRTPTMLECEVLGNDIGLPKRVVQVWFQNARAKEKK. A C2H2-type 22 zinc finger spans residues 3032–3056; sequence TECTLCGIKYSARLSVRDHIFSQQH. Disordered regions lie at residues 3145-3274 and 3415-3476; these read FTPA…AGTG and QQQQ…SASA. Polar residues predominate over residues 3147-3156; that stretch reads PANTALTSPK. The span at 3181 to 3199 shows a compositional bias: low complexity; sequence PSSASLSSPTPAQATMAMA. A compositionally biased stretch (pro residues) spans 3200–3221; it reads PQPPPQPQQPQPPVQQPPPPPA. Low complexity predominate over residues 3222-3234; the sequence is AQQIPAPQLTPQQ. The span at 3235 to 3267 shows a compositional bias: basic and acidic residues; it reads QRKDKDGEKGKEKEKAHKGKGEPLPVPKKEKGE. Lys-3262 participates in a covalent cross-link: Glycyl lysine isopeptide (Lys-Gly) (interchain with G-Cter in SUMO1). A Phosphoserine modification is found at Ser-3434. Positions 3435–3453 are enriched in basic and acidic residues; the sequence is PDKDPAKESPKPEEQKNVP. Phosphoserine is present on Ser-3457. The C2H2-type 23 zinc finger occupies 3552-3576; that stretch reads YHCLACESALCGEEALSQHLESALH. The disordered stretch occupies residues 3588–3726; the sequence is AKEHPSLLPH…TSVGTDTFRL (139 aa). Composition is skewed to low complexity over residues 3605 to 3618 and 3645 to 3677; these read STAS…HSND and SRAS…VQPS. At Ser-3616 the chain carries Phosphoserine. Phosphoserine is present on Ser-3700. The segment covering 3715–3726 has biased composition (polar residues); that stretch reads GLTSVGTDTFRL.

In terms of assembly, interacts with ALKBH4 and PIAS3. Interacts with FNBP3. Interacts with ESR1, RUNX3, TRIM25, SMAD2 and SMAD3. In terms of processing, phosphorylated at Ser-2634 in both embryonic and adult brain. Phosphorylation at Ser-1600, Ser-2795, Ser-2804, Ser-2900, Ser-3434, Ser-3616 and Ser-3700 is restricted to the embryonic brain. Hyperphosphorylation in embryonic brain protects ZFHX3 from calpain/CAPN1-mediated degradation. Post-translationally, ubiquitinated, leading to its proteasomal degradation. Nuclear localization is essential for its sumoylation. Expressed in suprachiasmatic nucleus (SCN) of the brain (at protein level). Expressed in skeletal muscle. Levels of expression are high in myoblasts but low in differentiated muscle. Expressed in the heart, primarily in the atria.

It localises to the nucleus. It is found in the cytoplasm. In terms of biological role, transcriptional regulator which can act as an activator or a repressor. Inhibits the enhancer element of the AFP gene by binding to its AT-rich core sequence. In concert with SMAD-dependent TGF-beta signaling can repress the transcription of AFP via its interaction with SMAD2/3. Regulates the circadian locomotor rhythms via transcriptional activation of neuropeptidergic genes which are essential for intercellular synchrony and rhythm amplitude in the suprachiasmatic nucleus (SCN) of the brain. Regulator of myoblasts differentiation through the binding to the AT-rich sequence of MYF6 promoter and promoter repression. Down-regulates the MUC5AC promoter in gastric cancer. In association with RUNX3, up-regulates CDKN1A promoter activity following TGF-beta stimulation. This Mus musculus (Mouse) protein is Zinc finger homeobox protein 3 (Zfhx3).